Reading from the N-terminus, the 177-residue chain is ATP-dependent protease subunit HslV (177 aa).

Thr-6 is a catalytic residue. Residues Ala-162, Cys-165, and Thr-168 each coordinate Na(+).

It belongs to the peptidase T1B family. HslV subfamily. In terms of assembly, a double ring-shaped homohexamer of HslV is capped on each side by a ring-shaped HslU homohexamer. The assembly of the HslU/HslV complex is dependent on binding of ATP.

It localises to the cytoplasm. It carries out the reaction ATP-dependent cleavage of peptide bonds with broad specificity.. Allosterically activated by HslU binding. Protease subunit of a proteasome-like degradation complex believed to be a general protein degrading machinery. The chain is ATP-dependent protease subunit HslV from Desulfovibrio desulfuricans (strain ATCC 27774 / DSM 6949 / MB).